A 184-amino-acid polypeptide reads, in one-letter code: UPF0301 protein RSKD131_2391 (184 aa).

The protein belongs to the UPF0301 (AlgH) family.

The chain is UPF0301 protein RSKD131_2391 from Cereibacter sphaeroides (strain KD131 / KCTC 12085) (Rhodobacter sphaeroides).